The primary structure comprises 132 residues: Agouti-signaling protein (132 aa).

The signal sequence occupies residues 1-22; sequence MDVTRLLLATLLVFLCFFTAYS. Asparagine 39 carries N-linked (GlcNAc...) asparagine glycosylation. The interval 61 to 87 is disordered; sequence QISRKEAEKKRSSKKEASMKKVARPRT. The segment covering 63-79 has biased composition (basic and acidic residues); that stretch reads SRKEAEKKRSSKKEASM. Intrachain disulfides connect cysteine 93-cysteine 108, cysteine 100-cysteine 114, cysteine 107-cysteine 125, cysteine 111-cysteine 132, and cysteine 116-cysteine 123. The region spanning 93-132 is the Agouti domain; that stretch reads CVATRDSCKSPAPACCDPCASCQCRFFRSACSCRVLSLNC.

The protein localises to the secreted. Involved in the regulation of melanogenesis. The binding of ASP to MC1R precludes alpha-MSH initiated signaling and thus blocks production of cAMP, leading to a down-regulation of eumelanogenesis (brown/black pigment) and thus increasing synthesis of pheomelanin (yellow/red pigment). This Macaca nigra (Celebes black macaque) protein is Agouti-signaling protein (ASIP).